The sequence spans 325 residues: MGNENSSLVKIRRGSKEPNVIIECVDSKKDHLSTPVYRKKSRRSVSQSRPTSIIEPPKRSIVPPIPALIKGQLSGDDSISIGSRKSSVSNFRLSSDGSGDSLLSPLTASSNDRRRSRSLCSAQMKDDAQAVAAQQNKDDKTGGSGGRKASSGLVPSLNRLRIQQCFKAAKPSIGDAIMKRAAASRAEMRTMLSKMNEKQIECLGKQMFELITDAVENADKSEKVLTHARQLGGTYASLCPLGFRPDLFAPLADAAIAECVKLDGVHKRCETLSAWSQLFSALFTGVRDGYYQRVRHQRRTSLPQNTITKQLSVDFSKTSDTSFVR.

Disordered stretches follow at residues 32–65 and 99–152; these read LSTP…VPPI and GDSL…ASSG. Positions 153–291 constitute a Globin domain; the sequence is LVPSLNRLRI…LFTGVRDGYY (139 aa).

This is an uncharacterized protein from Caenorhabditis elegans.